The following is a 370-amino-acid chain: Homoserine O-acetyltransferase (370 aa).

The region spanning 44–350 (NAILVAHAWT…AYGHDAFLLE (307 aa)) is the AB hydrolase-1 domain. Residue S150 is the Nucleophile of the active site. R217 lines the substrate pocket. Residues D311 and H344 contribute to the active site. D345 serves as a coordination point for substrate.

Belongs to the AB hydrolase superfamily. MetX family. As to quaternary structure, homodimer.

It is found in the cytoplasm. The catalysed reaction is L-homoserine + acetyl-CoA = O-acetyl-L-homoserine + CoA. The protein operates within amino-acid biosynthesis; L-methionine biosynthesis via de novo pathway; O-acetyl-L-homoserine from L-homoserine: step 1/1. In terms of biological role, transfers an acetyl group from acetyl-CoA to L-homoserine, forming acetyl-L-homoserine. The polypeptide is Homoserine O-acetyltransferase (Geotalea uraniireducens (strain Rf4) (Geobacter uraniireducens)).